We begin with the raw amino-acid sequence, 997 residues long: Protein translocase subunit SecA (997 aa).

ATP-binding positions include Gln-84, Gly-102–Thr-106, and Asp-582. The segment at Pro-950 to Lys-997 is disordered. The span at Ala-957–Arg-971 shows a compositional bias: basic and acidic residues. The span at Glu-984 to Lys-997 shows a compositional bias: basic residues.

It belongs to the SecA family. As to quaternary structure, part of the essential Sec protein translocation apparatus which comprises SecA, SecYEG and auxiliary proteins SecDF. Other proteins may also be involved. Monomer and homodimer.

The protein localises to the cell inner membrane. Its subcellular location is the cytoplasm. It carries out the reaction ATP + H2O + cellular proteinSide 1 = ADP + phosphate + cellular proteinSide 2.. Functionally, part of the Sec protein translocase complex. Interacts with the SecYEG preprotein conducting channel. Has a central role in coupling the hydrolysis of ATP to the transfer of proteins into and across the cell membrane, serving as an ATP-driven molecular motor driving the stepwise translocation of polypeptide chains across the membrane. The polypeptide is Protein translocase subunit SecA (Thermus thermophilus (strain ATCC 27634 / DSM 579 / HB8)).